Here is a 215-residue protein sequence, read N- to C-terminus: uncharacterized protein (215 aa).

2 disordered regions span residues 1–144 and 156–215; these read MPKG…PYLR and IQGH…GAPA. Composition is skewed to low complexity over residues 16 to 29, 49 to 58, 85 to 96, and 104 to 127; these read ASTPSRSSWPASPT, SSSWPKSPIK, SGSSSPGPSSSR, and STAASSRSPATSARSTSSCPRAAP.

This is an uncharacterized protein from Homo sapiens (Human).